We begin with the raw amino-acid sequence, 863 residues long: Glycogen phosphorylase (863 aa).

Lys618 is modified (N6-(pyridoxal phosphate)lysine).

This sequence belongs to the glycogen phosphorylase family. Requires pyridoxal 5'-phosphate as cofactor.

The enzyme catalyses [(1-&gt;4)-alpha-D-glucosyl](n) + phosphate = [(1-&gt;4)-alpha-D-glucosyl](n-1) + alpha-D-glucose 1-phosphate. Functionally, phosphorylase is an important allosteric enzyme in carbohydrate metabolism. Enzymes from different sources differ in their regulatory mechanisms and in their natural substrates. However, all known phosphorylases share catalytic and structural properties. This Mycobacterium bovis (strain ATCC BAA-935 / AF2122/97) protein is Glycogen phosphorylase (glgP).